A 305-amino-acid polypeptide reads, in one-letter code: 4-diphosphocytidyl-2-C-methyl-D-erythritol kinase (305 aa).

K17 is an active-site residue. An ATP-binding site is contributed by 111 to 121; it reads PVASGIGGGSA. D154 is an active-site residue.

Belongs to the GHMP kinase family. IspE subfamily.

It carries out the reaction 4-CDP-2-C-methyl-D-erythritol + ATP = 4-CDP-2-C-methyl-D-erythritol 2-phosphate + ADP + H(+). The protein operates within isoprenoid biosynthesis; isopentenyl diphosphate biosynthesis via DXP pathway; isopentenyl diphosphate from 1-deoxy-D-xylulose 5-phosphate: step 3/6. In terms of biological role, catalyzes the phosphorylation of the position 2 hydroxy group of 4-diphosphocytidyl-2C-methyl-D-erythritol. This chain is 4-diphosphocytidyl-2-C-methyl-D-erythritol kinase, found in Gluconacetobacter diazotrophicus (strain ATCC 49037 / DSM 5601 / CCUG 37298 / CIP 103539 / LMG 7603 / PAl5).